We begin with the raw amino-acid sequence, 272 residues long: Ribosomal RNA small subunit methyltransferase J (272 aa).

Residues Arg-120 to Asp-121, Glu-136 to Arg-137, Ser-171 to Ser-172, and Asp-188 contribute to the S-adenosyl-L-methionine site.

The protein belongs to the methyltransferase superfamily. RsmJ family.

It is found in the cytoplasm. It catalyses the reaction guanosine(1516) in 16S rRNA + S-adenosyl-L-methionine = N(2)-methylguanosine(1516) in 16S rRNA + S-adenosyl-L-homocysteine + H(+). In terms of biological role, specifically methylates the guanosine in position 1516 of 16S rRNA. The chain is Ribosomal RNA small subunit methyltransferase J from Colwellia psychrerythraea (strain 34H / ATCC BAA-681) (Vibrio psychroerythus).